A 1288-amino-acid chain; its full sequence is Disease resistance protein RRS1 (1288 aa).

The TIR domain occupies 5–146 (EKDEEFVCIS…EIVRDVYETH (142 aa)). The important for interaction with RPS4 stretch occupies residues 25–26 (SH). In terms of domain architecture, NB-ARC spans 170–421 (IGIRCVGIWG…LLEGCGFFPH (252 aa)). 179–186 (GMPGIGKT) lines the ATP pocket. 12 LRR repeats span residues 498 to 522 (SEEI…AFKN), 535 to 553 (NPEV…HSLP), 554 to 575 (NELR…NFDP), 577 to 598 (HLVE…TKNL), 621 to 646 (AENL…RLLR), 665 to 688 (PPNI…TVKP), 697 to 720 (LTEI…NSSC), 740 to 764 (LPNM…SIQG), 766 to 791 (PRFL…SLEI), 792 to 807 (LNAH…NMAN), 808 to 829 (LEFL…QGFP), and 830 to 852 (RNLK…PLSL). A Nuclear localization signal motif is present at residues 986–1003 (RKFHCWAPWQVVPKVRKD). Residues 1202–1270 (IPAIDEGDLW…YLSEHNHPRP (69 aa)) constitute a DNA-binding region (WRKY). The segment at 1267–1288 (HPRPTKRKALADSTRSTSSSIC) is disordered. Positions 1279 to 1288 (STRSTSSSIC) are enriched in polar residues.

This sequence belongs to the disease resistance TIR-NB-LRR family. As to quaternary structure, interacts with PopP2, a R.solanacearum type III effector. Interacts with RPS4.

It localises to the nucleus. It is found in the cytoplasm. Transcription factor. Interacts specifically with the W box (5'-(T)TGAC[CT]-3'), a frequently occurring elicitor-responsive cis-acting element. Also acts as a disease resistance protein involved in resistance to fungal and bacterial pathogens, including R.solanacearum, P.syringae pv. tomato and C.higginsianum. Heterodimerization with RPS4 is required to form a functional complex to recognize AvrRps4 and PopP2. Contributes to temperature-conditioned RPS4 auto-immunity. This Arabidopsis thaliana (Mouse-ear cress) protein is Disease resistance protein RRS1.